Here is a 233-residue protein sequence, read N- to C-terminus: Fibrillarin-like rRNA/tRNA 2'-O-methyltransferase (233 aa).

Residues 90-91, 109-110, 134-135, and 154-157 each bind S-adenosyl-L-methionine; these read TT, EF, DA, and DVAQ.

The protein belongs to the methyltransferase superfamily. Fibrillarin family. Interacts with nop5. Component of box C/D small ribonucleoprotein (sRNP) particles that contain rpl7ae, FlpA and nop5, plus a guide RNA.

In terms of biological role, involved in pre-rRNA and tRNA processing. Utilizes the methyl donor S-adenosyl-L-methionine to catalyze the site-specific 2'-hydroxyl methylation of ribose moieties in rRNA and tRNA. Site specificity is provided by a guide RNA that base pairs with the substrate. Methylation occurs at a characteristic distance from the sequence involved in base pairing with the guide RNA. This is Fibrillarin-like rRNA/tRNA 2'-O-methyltransferase from Aeropyrum pernix (strain ATCC 700893 / DSM 11879 / JCM 9820 / NBRC 100138 / K1).